The primary structure comprises 206 residues: Large ribosomal subunit protein uL4 (206 aa).

The tract at residues 46–78 (GNRAQKDREQVKHTTKKPWRQKGTGRARAGMSS) is disordered. Residues 58 to 70 (HTTKKPWRQKGTG) are compositionally biased toward basic residues.

Belongs to the universal ribosomal protein uL4 family. As to quaternary structure, part of the 50S ribosomal subunit.

One of the primary rRNA binding proteins, this protein initially binds near the 5'-end of the 23S rRNA. It is important during the early stages of 50S assembly. It makes multiple contacts with different domains of the 23S rRNA in the assembled 50S subunit and ribosome. Functionally, forms part of the polypeptide exit tunnel. This is Large ribosomal subunit protein uL4 from Burkholderia cenocepacia (strain ATCC BAA-245 / DSM 16553 / LMG 16656 / NCTC 13227 / J2315 / CF5610) (Burkholderia cepacia (strain J2315)).